Reading from the N-terminus, the 232-residue chain is Phosphoadenosine 5'-phosphosulfate reductase (232 aa).

Cys228 functions as the Nucleophile; cysteine thiosulfonate intermediate in the catalytic mechanism.

This sequence belongs to the PAPS reductase family. CysH subfamily.

The protein localises to the cytoplasm. The enzyme catalyses [thioredoxin]-disulfide + sulfite + adenosine 3',5'-bisphosphate + 2 H(+) = [thioredoxin]-dithiol + 3'-phosphoadenylyl sulfate. The protein operates within sulfur metabolism; hydrogen sulfide biosynthesis; sulfite from sulfate: step 3/3. In terms of biological role, catalyzes the formation of sulfite from phosphoadenosine 5'-phosphosulfate (PAPS) using thioredoxin as an electron donor. In Synechococcus sp. (strain ATCC 27144 / PCC 6301 / SAUG 1402/1) (Anacystis nidulans), this protein is Phosphoadenosine 5'-phosphosulfate reductase.